Reading from the N-terminus, the 622-residue chain is Mitochondrial Rho GTPase 2 (622 aa).

Over 1–596 the chain is Cytoplasmic; it reads MRRDVRILLL…ELHPTPFWLR (596 aa). A Miro 1 domain is found at 2–168; it reads RRDVRILLLG…FYYAQKAVLH (167 aa). GTP-binding residues include Gly16, Lys17, Thr18, and Ser19. A Mg(2+)-binding site is contributed by Thr18. Residue Asp57 coordinates Mg(2+). Ser59 contacts GTP. Lys96 is covalently cross-linked (Glycyl lysine isopeptide (Lys-Gly) (interchain with G-Cter in ubiquitin)). GTP-binding residues include Asn118, Lys119, Asp121, Ala149, and Lys150. Residue Lys119 forms a Glycyl lysine isopeptide (Lys-Gly) (interchain with G-Cter in ubiquitin) linkage. Lys164 participates in a covalent cross-link: Glycyl lysine isopeptide (Lys-Gly) (interchain with G-Cter in ubiquitin). EF-hand domains lie at 184–219 and 304–339; these read ACAQ…CFGH and RGYQ…FSVA. Residues Asp197, Asp199, Asp201, Glu208, Asp317, Asp319, Asp321, and Glu328 each contribute to the Ca(2+) site. A Miro 2 domain is found at 415-580; sequence RSVLMCKVLG…FTQLATMATF (166 aa). GTP-binding residues include Gly427, Gly429, Lys430, Ser431, and Ala432. Ser431 provides a ligand contact to Mg(2+). Glu475 provides a ligand contact to Mg(2+). Lys529, Asp531, and Cys560 together coordinate GTP. Residues 597–619 traverse the membrane as a helical; Anchor for type IV membrane protein segment; that stretch reads GVLVAVGTAVAAVLSFSLYRVLV. Topologically, residues 620–622 are mitochondrial intermembrane; sequence KSR.

The protein belongs to the mitochondrial Rho GTPase family. As to quaternary structure, homodimer. Interacts with the kinesin-binding proteins TRAK1/OIP106 and TRAK2/GRIF1, forming a link between mitochondria and the trafficking apparatus of the microtubules. Interacts with ARMCX3. Found in a complex with KIF5B, OGT, RHOT1 and TRAK1. In terms of processing, ubiquitinated by PRKN in a PINK1-dependent manner, leading to its degradation.

The protein resides in the mitochondrion outer membrane. It carries out the reaction GTP + H2O = GDP + phosphate + H(+). The enzyme catalyses ATP + H2O = ADP + phosphate + H(+). It catalyses the reaction UTP + H2O = UDP + phosphate + H(+). Atypical mitochondrial nucleoside-triphosphatase (NTPase) involved in mitochondrial trafficking. Probably involved in control of anterograde transport of mitochondria and their subcellular distribution. Can hydrolyze GTP, ATP and UTP. The polypeptide is Mitochondrial Rho GTPase 2 (Rhot2) (Rattus norvegicus (Rat)).